The primary structure comprises 308 residues: GTPase Era (308 aa).

The 168-residue stretch at 14-181 (RCGFVALIGA…RRALAAAMPE (168 aa)) folds into the Era-type G domain. Residues 22 to 29 (GAPNVGKS) are G1. 22–29 (GAPNVGKS) lines the GTP pocket. Residues 48 to 52 (QTTRA) are G2. A G3 region spans residues 69–72 (DTPG). GTP is bound by residues 69 to 73 (DTPGI) and 131 to 134 (NKID). Residues 131-134 (NKID) form a G4 region. Residues 160-162 (VAA) form a G5 region. The KH type-2 domain occupies 212-289 (LHQELPYQST…HLFLFVKVRD (78 aa)).

This sequence belongs to the TRAFAC class TrmE-Era-EngA-EngB-Septin-like GTPase superfamily. Era GTPase family. As to quaternary structure, monomer.

It localises to the cytoplasm. The protein localises to the cell inner membrane. Its function is as follows. An essential GTPase that binds both GDP and GTP, with rapid nucleotide exchange. Plays a role in 16S rRNA processing and 30S ribosomal subunit biogenesis and possibly also in cell cycle regulation and energy metabolism. The polypeptide is GTPase Era (Afipia carboxidovorans (strain ATCC 49405 / DSM 1227 / KCTC 32145 / OM5) (Oligotropha carboxidovorans)).